Here is a 439-residue protein sequence, read N- to C-terminus: Enolase (439 aa).

Substrate is bound by residues H157 and E166. The active-site Proton donor is the E209. The Mg(2+) site is built by D244, E297, and D324. Residues E297 and D324 each coordinate substrate. K349 functions as the Proton acceptor in the catalytic mechanism. Residues 376 to 379 (SHRS) and K400 each bind substrate.

The protein belongs to the enolase family. In terms of assembly, homodimer. Requires Mg(2+) as cofactor.

It localises to the cytoplasm. The catalysed reaction is (2R)-2-phosphoglycerate = phosphoenolpyruvate + H2O. It participates in carbohydrate degradation; glycolysis; pyruvate from D-glyceraldehyde 3-phosphate: step 4/5. The chain is Enolase (ENOL) from Mastigamoeba balamuthi (Phreatamoeba balamuthi).